The sequence spans 87 residues: Small ribosomal subunit protein bS20 (87 aa).

It belongs to the bacterial ribosomal protein bS20 family.

In terms of biological role, binds directly to 16S ribosomal RNA. This chain is Small ribosomal subunit protein bS20, found in Alkaliphilus oremlandii (strain OhILAs) (Clostridium oremlandii (strain OhILAs)).